The following is a 338-amino-acid chain: Tetraacyldisaccharide 4'-kinase (338 aa).

An ATP-binding site is contributed by 65–72 (TVGGTGKT).

Belongs to the LpxK family.

The catalysed reaction is a lipid A disaccharide + ATP = a lipid IVA + ADP + H(+). It participates in glycolipid biosynthesis; lipid IV(A) biosynthesis; lipid IV(A) from (3R)-3-hydroxytetradecanoyl-[acyl-carrier-protein] and UDP-N-acetyl-alpha-D-glucosamine: step 6/6. Functionally, transfers the gamma-phosphate of ATP to the 4'-position of a tetraacyldisaccharide 1-phosphate intermediate (termed DS-1-P) to form tetraacyldisaccharide 1,4'-bis-phosphate (lipid IVA). This Paraburkholderia xenovorans (strain LB400) protein is Tetraacyldisaccharide 4'-kinase.